We begin with the raw amino-acid sequence, 270 residues long: Putative pyruvate, phosphate dikinase regulatory protein 1 (270 aa).

151-158 (GVSRTSKT) contributes to the ADP binding site.

It belongs to the pyruvate, phosphate/water dikinase regulatory protein family. PDRP subfamily.

The enzyme catalyses N(tele)-phospho-L-histidyl/L-threonyl-[pyruvate, phosphate dikinase] + ADP = N(tele)-phospho-L-histidyl/O-phospho-L-threonyl-[pyruvate, phosphate dikinase] + AMP + H(+). It catalyses the reaction N(tele)-phospho-L-histidyl/O-phospho-L-threonyl-[pyruvate, phosphate dikinase] + phosphate + H(+) = N(tele)-phospho-L-histidyl/L-threonyl-[pyruvate, phosphate dikinase] + diphosphate. In terms of biological role, bifunctional serine/threonine kinase and phosphorylase involved in the regulation of the pyruvate, phosphate dikinase (PPDK) by catalyzing its phosphorylation/dephosphorylation. This Enterococcus faecalis (strain ATCC 700802 / V583) protein is Putative pyruvate, phosphate dikinase regulatory protein 1.